A 166-amino-acid polypeptide reads, in one-letter code: 3-dehydroquinate dehydratase (166 aa).

The active-site Proton acceptor is tyrosine 22. The substrate site is built by asparagine 73, histidine 79, and aspartate 86. Histidine 99 serves as the catalytic Proton donor. Substrate-binding positions include 100 to 101 (IT) and arginine 110.

Belongs to the type-II 3-dehydroquinase family. In terms of assembly, homododecamer.

The catalysed reaction is 3-dehydroquinate = 3-dehydroshikimate + H2O. The protein operates within metabolic intermediate biosynthesis; chorismate biosynthesis; chorismate from D-erythrose 4-phosphate and phosphoenolpyruvate: step 3/7. In terms of biological role, catalyzes a trans-dehydration via an enolate intermediate. The polypeptide is 3-dehydroquinate dehydratase (Wolinella succinogenes (strain ATCC 29543 / DSM 1740 / CCUG 13145 / JCM 31913 / LMG 7466 / NCTC 11488 / FDC 602W) (Vibrio succinogenes)).